The following is a 383-amino-acid chain: Sulfate adenylyltransferase (383 aa).

This sequence belongs to the sulfate adenylyltransferase family.

It carries out the reaction sulfate + ATP + H(+) = adenosine 5'-phosphosulfate + diphosphate. It functions in the pathway sulfur metabolism; hydrogen sulfide biosynthesis; sulfite from sulfate: step 1/3. The chain is Sulfate adenylyltransferase (sat) from Aeropyrum pernix (strain ATCC 700893 / DSM 11879 / JCM 9820 / NBRC 100138 / K1).